The primary structure comprises 361 residues: Chorismate synthase (361 aa).

Residues arginine 48 and arginine 54 each coordinate NADP(+). FMN-binding positions include 125-127 (RSS), 238-239 (NA), glycine 278, 293-297 (KPTSS), and arginine 319.

It belongs to the chorismate synthase family. Homotetramer. The cofactor is FMNH2.

The enzyme catalyses 5-O-(1-carboxyvinyl)-3-phosphoshikimate = chorismate + phosphate. It participates in metabolic intermediate biosynthesis; chorismate biosynthesis; chorismate from D-erythrose 4-phosphate and phosphoenolpyruvate: step 7/7. Its function is as follows. Catalyzes the anti-1,4-elimination of the C-3 phosphate and the C-6 proR hydrogen from 5-enolpyruvylshikimate-3-phosphate (EPSP) to yield chorismate, which is the branch point compound that serves as the starting substrate for the three terminal pathways of aromatic amino acid biosynthesis. This reaction introduces a second double bond into the aromatic ring system. This chain is Chorismate synthase, found in Photorhabdus laumondii subsp. laumondii (strain DSM 15139 / CIP 105565 / TT01) (Photorhabdus luminescens subsp. laumondii).